Reading from the N-terminus, the 183-residue chain is Protein Syd (183 aa).

The protein belongs to the Syd family.

The protein localises to the cell inner membrane. In terms of biological role, interacts with the SecY protein in vivo. May bind preferentially to an uncomplexed state of SecY, thus functioning either as a chelating agent for excess SecY in the cell or as a regulatory factor that negatively controls the translocase function. In Aliivibrio fischeri (strain MJ11) (Vibrio fischeri), this protein is Protein Syd.